The primary structure comprises 280 residues: Energy-coupling factor transporter ATP-binding protein EcfA1 (280 aa).

In terms of domain architecture, ABC transporter spans 6–244; sequence IECKNVVYKY…VPLMKNIGLD (239 aa). 43-50 is a binding site for ATP; that stretch reads GHNGSGKS.

Belongs to the ABC transporter superfamily. Energy-coupling factor EcfA family. As to quaternary structure, forms a stable energy-coupling factor (ECF) transporter complex composed of 2 membrane-embedded substrate-binding proteins (S component), 2 ATP-binding proteins (A component) and 2 transmembrane proteins (T component).

The protein localises to the cell membrane. Functionally, ATP-binding (A) component of a common energy-coupling factor (ECF) ABC-transporter complex. Unlike classic ABC transporters this ECF transporter provides the energy necessary to transport a number of different substrates. This Clostridium novyi (strain NT) protein is Energy-coupling factor transporter ATP-binding protein EcfA1.